Here is a 269-residue protein sequence, read N- to C-terminus: Achromobactin transport ATP-binding protein CbrD (269 aa).

The ABC transporter domain maps to 4-240 (ITSRELTLGY…ALVKTVFNLD (237 aa)). An ATP-binding site is contributed by 36–43 (GSNGCGKS).

This sequence belongs to the ABC transporter superfamily.

It is found in the cell inner membrane. Functionally, part of the binding-protein-dependent transport system CbrABCD for uptake of the siderophore achromobactin. Probably responsible for energy coupling to the transport system. This is Achromobactin transport ATP-binding protein CbrD (cbrD) from Dickeya dadantii (strain 3937) (Erwinia chrysanthemi (strain 3937)).